The primary structure comprises 470 residues: Monocarboxylate transporter 4 (470 aa).

Topologically, residues 1 to 17 are cytoplasmic; that stretch reads MGGAVVDEGPTGIKAPD. A helical transmembrane segment spans residues 18–38; sequence GGWGWAVLFGCFIITGFSYAF. Residues 39–61 lie on the Extracellular side of the membrane; the sequence is PKAVSVFFKELMHEFGIGYSDTA. The chain crosses the membrane as a helical span at residues 62-82; the sequence is WISSILLAMLYGTGPLCSVCV. Over 83 to 84 the chain is Cytoplasmic; it reads NR. A helical transmembrane segment spans residues 85–105; sequence FGCRPVMLVGGLFASLGMVAA. At 106 to 109 the chain is on the extracellular side; sequence SFCR. A helical membrane pass occupies residues 110-130; it reads SIIQIYLTTGVITGLGLALNF. At 131 to 149 the chain is on the cytoplasmic side; sequence QPSLIMLNRYFNKRRPIAN. The helical transmembrane segment at 150-170 threads the bilayer; the sequence is GLAAAGSPVFLCALSPLGQLL. The Extracellular portion of the chain corresponds to 171–179; sequence QDHYGWRGG. A helical membrane pass occupies residues 180–200; sequence FLILGGLLLNCCVCAALMRPL. The Cytoplasmic segment spans residues 201-231; sequence VAPQVGGGTEPRGPQRPPQRLLDLSVFRDRG. The helical transmembrane segment at 232–252 threads the bilayer; sequence FLIYAVAASIMVLGLFVPPVF. The Extracellular portion of the chain corresponds to 253-267; the sequence is VVSYAKDMGVPDTKA. Residues 268–288 traverse the membrane as a helical segment; it reads AFLLTILGFIDIFARPTAGFI. Residues 289-298 are Cytoplasmic-facing; the sequence is TGLKKVRPYS. The chain crosses the membrane as a helical span at residues 299-319; the sequence is VYLFSFAMFFNGFTDLTGSTA. Topologically, residues 320 to 321 are extracellular; that stretch reads TD. Residues 322–342 form a helical membrane-spanning segment; it reads YGGLVVFCIFFGISYGMVGAL. At 343-355 the chain is on the cytoplasmic side; the sequence is QFEVLMAIVGTQK. A helical transmembrane segment spans residues 356 to 376; it reads FSSAIGLVLLLEAVAVLIGPP. The Extracellular portion of the chain corresponds to 377–391; it reads SGGKLLDATKVYKYV. A helical membrane pass occupies residues 392–412; that stretch reads FILAGAEVLTSSLVLLLGNFF. The Cytoplasmic portion of the chain corresponds to 413–470; it reads CIGKRKRPEVTEPEEVASEEKLHKPPVDVGVDSREVEHFLKAEPEKNGEVVHTPETSV. Basolateral sorting signal stretches follow at residues 429-446 and 446-470; these read ASEE…VDSR and REVE…ETSV. Position 430 is a phosphoserine (serine 430). Threonine 465 carries the post-translational modification Phosphothreonine. Serine 469 carries the phosphoserine modification.

This sequence belongs to the major facilitator superfamily. Monocarboxylate porter (TC 2.A.1.13) family. As to quaternary structure, interacts with BSG; interaction mediates SLC16A3 targeting to the plasma membrane.

The protein localises to the cell membrane. It localises to the basolateral cell membrane. It catalyses the reaction (S)-lactate(in) + H(+)(in) = (S)-lactate(out) + H(+)(out). The catalysed reaction is pyruvate(out) + H(+)(out) = pyruvate(in) + H(+)(in). Its function is as follows. Proton-dependent transporter of monocarboxylates such as L-lactate and pyruvate. Plays a predominant role in the L-lactate efflux from highly glycolytic cells. In Mus musculus (Mouse), this protein is Monocarboxylate transporter 4 (Slc16a3).